The following is a 160-amino-acid chain: Transcription elongation factor GreA (160 aa).

Positions 1 to 72 form a coiled coil; sequence MAEKTYVMTL…QIQILETKIR (72 aa).

The protein belongs to the GreA/GreB family.

Functionally, necessary for efficient RNA polymerase transcription elongation past template-encoded arresting sites. The arresting sites in DNA have the property of trapping a certain fraction of elongating RNA polymerases that pass through, resulting in locked ternary complexes. Cleavage of the nascent transcript by cleavage factors such as GreA or GreB allows the resumption of elongation from the new 3'terminus. GreA releases sequences of 2 to 3 nucleotides. This is Transcription elongation factor GreA from Streptococcus thermophilus (strain ATCC BAA-491 / LMD-9).